An 840-amino-acid polypeptide reads, in one-letter code: Protein translocase subunit SecA (840 aa).

Residues Gln-89, 107–111 (GEGKT), and Asp-514 each bind ATP.

This sequence belongs to the SecA family. In terms of assembly, monomer and homodimer. Part of the essential Sec protein translocation apparatus which comprises SecA, SecYEG and auxiliary proteins SecDF-YajC and YidC.

The protein localises to the cell inner membrane. The protein resides in the cytoplasm. It catalyses the reaction ATP + H2O + cellular proteinSide 1 = ADP + phosphate + cellular proteinSide 2.. In terms of biological role, part of the Sec protein translocase complex. Interacts with the SecYEG preprotein conducting channel. Has a central role in coupling the hydrolysis of ATP to the transfer of proteins into and across the cell membrane, serving as an ATP-driven molecular motor driving the stepwise translocation of polypeptide chains across the membrane. In Blochmanniella floridana, this protein is Protein translocase subunit SecA.